The sequence spans 574 residues: MSHQPLSCLTEKGDSPTETTGNGPPTLAHPNLDTFTPHELLQQMRELLIENHQLKEAMKLNNQAMKGRFEELSAWTEKQKEERLFFETQSKEAKERLTALSLENEKLKQELGKLKGKTERSFEDLTGDPRVPKAEAEQEVEQLKTQVARLQAEKADLLGIVSELQLKLNSGGPSEDSFVEIRMAEGEADAAMKEIKTSPGPIRTDSIDTSKSAEGTRNYLEFEELTVSQLLLCLREGNQKVERLEIALKEAKERILDFEKKAKDRSETETQTEEHKEQEKEEEKSPETVGSEVEMLNLQVTTLFKELQEAHTKLSEAELMKKRLQEKCQALERKNSATPSELNEKQELLYNNKKLELQVESMRSEIKMEQAKTEEEKSKLTTLQLTHNRLLQEYNNALKTIEELKRRESEKVDKVVLQELNGKLEMAEKALASKQLQMDEMKQTIAKQEKDLETMAVLRAQMEVYCSDFHAERAAREKIHEEKEQLALQLAVLLKDDNAFEEGASRQSLMEMQSRHGARASDADQQAFLVQRGAEDRNWLQQQQQNIPIHSCPKCGEVLPDIDTLLIHVTDCII.

Residues 1 to 33 are disordered; it reads MSHQPLSCLTEKGDSPTETTGNGPPTLAHPNLD. Residues 38-170 adopt a coiled-coil conformation; sequence HELLQQMREL…VSELQLKLNS (133 aa). An interaction with Rab8 region spans residues 58 to 209; the sequence is MKLNNQAMKG…GPIRTDSIDT (152 aa). Residues 176 to 181 carry the LIR motif; that stretch reads DSFVEI. Phosphoserine; by TBK1 is present on S177. Residue S198 is modified to Phosphoserine. The stretch at 233–496 forms a coiled coil; that stretch reads CLREGNQKVE…ALQLAVLLKD (264 aa). Residues 262 to 286 are compositionally biased toward basic and acidic residues; that stretch reads AKDRSETETQTEEHKEQEKEEEKSP. Positions 262-292 are disordered; sequence AKDRSETETQTEEHKEQEKEEEKSPETVGSE. S336 carries the post-translational modification Phosphoserine. Residues 405-574 are interaction with HD; sequence KRRESEKVDK…LLIHVTDCII (170 aa). The interaction with MYO6 stretch occupies residues 406-515; the sequence is RRESEKVDKV…RQSLMEMQSR (110 aa). A UBAN motif is present at residues 468–473; sequence DFHAER. S521 bears the Phosphoserine mark. The CCHC NOA-type zinc finger occupies 544-574; it reads QQNIPIHSCPKCGEVLPDIDTLLIHVTDCII. Zn(2+)-binding residues include C552, C555, H568, and C572.

Self-associates. Interacts with HD. Interacts with GTF3A. Interacts with MYO6. Interacts (via UBAN) with ubiquitinated TFRC. Interacts with GTP-bound Rab8 (RAB8A and/or RAB8B). Interacts with TBC1D17. Interacts with TBK1. Interacts with TRAF3. Binds to linear ubiquitin chains. Interacts with LC3 family members MAP1LC3A, MAP1LC3B, GABARAP, GABARAPL1 and GABARAPL2; OPTN phosphorylation increases the association (at least with MAP1LC3B). Interacts with RAB12; the interaction may be indirect. Interacts with TBK1; this interaction leads to the Golgi localization of TBK1 and its subsequent activation. Interacts with palmitoyltransferase ZDHHC17/HIP14; the interaction does not lead to palmitoylation of OPTN. Interacts with CYLD. Interacts with TOM1; the interaction is indirect and is mediated by MYO6, which acts as a bridge between TOM1 and OPTN. Interacts with USP12; the interaction is independent of USP12 deubiquitinase activity and may be involved in regulation of autophagic flux. In terms of processing, phosphorylated by TBK1, leading to restrict bacterial proliferation in case of infection. As to expression, present in aqueous humor of the eye (at protein level). Expressed in trabecular meshwork and astrocytes.

It localises to the cytoplasm. The protein resides in the perinuclear region. The protein localises to the golgi apparatus. Its subcellular location is the trans-Golgi network. It is found in the cytoplasmic vesicle. It localises to the autophagosome. The protein resides in the recycling endosome. Its function is as follows. Plays an important role in the maintenance of the Golgi complex, in membrane trafficking, in exocytosis, through its interaction with myosin VI and Rab8. Links myosin VI to the Golgi complex and plays an important role in Golgi ribbon formation. Negatively regulates the induction of IFNB in response to RNA virus infection. Plays a neuroprotective role in the eye and optic nerve. Probably part of the TNF-alpha signaling pathway that can shift the equilibrium toward induction of cell death. May act by regulating membrane trafficking and cellular morphogenesis via a complex that contains Rab8 and huntingtin (HD). Mediates the interaction of Rab8 with the probable GTPase-activating protein TBC1D17 during Rab8-mediated endocytic trafficking, such as that of transferrin receptor (TFRC/TfR); regulates Rab8 recruitment to tubules emanating from the endocytic recycling compartment. Autophagy receptor that interacts directly with both the cargo to become degraded and an autophagy modifier of the MAP1 LC3 family; targets ubiquitin-coated bacteria (xenophagy) and appears to function in the same pathway as SQSTM1 and CALCOCO2/NDP52. The polypeptide is Optineurin (OPTN) (Sus scrofa (Pig)).